A 206-amino-acid polypeptide reads, in one-letter code: ATP phosphoribosyltransferase (206 aa).

Belongs to the ATP phosphoribosyltransferase family. Short subfamily. Heteromultimer composed of HisG and HisZ subunits.

It is found in the cytoplasm. It carries out the reaction 1-(5-phospho-beta-D-ribosyl)-ATP + diphosphate = 5-phospho-alpha-D-ribose 1-diphosphate + ATP. It participates in amino-acid biosynthesis; L-histidine biosynthesis; L-histidine from 5-phospho-alpha-D-ribose 1-diphosphate: step 1/9. Catalyzes the condensation of ATP and 5-phosphoribose 1-diphosphate to form N'-(5'-phosphoribosyl)-ATP (PR-ATP). Has a crucial role in the pathway because the rate of histidine biosynthesis seems to be controlled primarily by regulation of HisG enzymatic activity. In Thermus thermophilus (strain ATCC 27634 / DSM 579 / HB8), this protein is ATP phosphoribosyltransferase.